The primary structure comprises 158 residues: NAD(P)H-quinone oxidoreductase subunit J, chloroplastic (158 aa).

This sequence belongs to the complex I 30 kDa subunit family. NDH is composed of at least 16 different subunits, 5 of which are encoded in the nucleus.

The protein localises to the plastid. Its subcellular location is the chloroplast thylakoid membrane. The enzyme catalyses a plastoquinone + NADH + (n+1) H(+)(in) = a plastoquinol + NAD(+) + n H(+)(out). It carries out the reaction a plastoquinone + NADPH + (n+1) H(+)(in) = a plastoquinol + NADP(+) + n H(+)(out). Functionally, NDH shuttles electrons from NAD(P)H:plastoquinone, via FMN and iron-sulfur (Fe-S) centers, to quinones in the photosynthetic chain and possibly in a chloroplast respiratory chain. The immediate electron acceptor for the enzyme in this species is believed to be plastoquinone. Couples the redox reaction to proton translocation, and thus conserves the redox energy in a proton gradient. In Guizotia abyssinica (Niger), this protein is NAD(P)H-quinone oxidoreductase subunit J, chloroplastic.